Consider the following 175-residue polypeptide: MDKLADLNYTLSVITSMNDTLHSIIEDPGMAYFPYIASVLTVLFTLHKASIPTMKIALKASKCSYKVIKYCVVTIINTLLKLAGYKEQVTTKDEIEQQMDRIVKEMRRQLEMIDKLTTREIEQIELLKRIHDNLITRPVNVIDMSMEFNQKNIKTLDEWESRKNPYEPSEVTASM.

Residues 1-28 are Lumenal-facing; sequence MDKLADLNYTLSVITSMNDTLHSIIEDP. 2 N-linked (GlcNAc...) asparagine; by host glycosylation sites follow: Asn-8 and Asn-18. The chain crosses the membrane as a helical; Signal-anchor for type III membrane protein span at residues 29–51; the sequence is GMAYFPYIASVLTVLFTLHKASI. The Cytoplasmic portion of the chain corresponds to 52–175; that stretch reads PTMKIALKAS…YEPSEVTASM (124 aa). Positions 120 and 123 each coordinate Ca(2+).

It belongs to the rotavirus NSP4 family. As to quaternary structure, homotetramer. Interacts with the immature particle in the viroplasm. Interacts with host CAV1, early and late in infection. Interacts with host integrin ITGA1/ITGB1 heterodimer. Interacts with host integrin ITGA2/ITGB1 heterodimer. Interaction with microtubules blocks trafficking to the Golgi apparatus. Post-translationally, the N-glycosyl content is primarily Man(9)GlcNAc, with a small amount of Man(8)GlcNAc.

It localises to the host rough endoplasmic reticulum membrane. It is found in the host membrane. The protein resides in the host caveola. Its subcellular location is the secreted. In terms of biological role, plays an essential role in the virus replication cycle by acting as a viroporin. Creates a pore in the host endoplasmic reticulum and as a consequence releases Ca(2+) in the cytoplasm of infected cell. In turn, high levels of cytoplasmic calcium trigger membrane trafficking and transport of viral ER-associated proteins to viroplasms, sites of viral genome replication and immature particle assembly. Functionally, the secreted form acts as an enterotoxin that causes phospholipase C-dependent elevation of the intracellular calcium concentration in host intestinal mucosa cells. Increased concentration of intracellular calcium disrupts the cytoskeleton and the tight junctions, raising the paracellular permeability. Potentiates chloride ion secretion through a calcium ion-dependent signaling pathway, inducing age-dependent diarrhea. To perform this enterotoxigenic role in vivo, NSP4 is released from infected enterocytes in a soluble form capable of diffusing within the intestinal lumen and interacting with host plasma membrane receptors on neighboring epithelial cells such as integrins ITGA1/ITGB1 and ITGA2/ITGB1. The chain is Non-structural glycoprotein 4 from Rotavirus A (strain RVA/Human/United Kingdom/ST3/1975/G4P2A[6]) (RV-A).